The sequence spans 198 residues: MPKIEMEPLRRRELIDAAIRTIGQRGSLDVTVAQIAHEAGVSPALAHHYFGGKDKLILATMRHLLRELGRDLNAAIKQANTPHERIAAIIAVNFSAAQFAQETIAAWLTFYVHAQQSDDIKRLLRIYARRLHSNLVFALEQLTSRARANRIAEGAGAMIDGLYIRHALGADAPDAASAIALVEDYIAIQLSGQPSAEN.

In terms of domain architecture, HTH tetR-type spans 8–68 (PLRRRELIDA…ATMRHLLREL (61 aa)). Positions 31–50 (TVAQIAHEAGVSPALAHHYF) form a DNA-binding region, H-T-H motif.

The protein operates within amine and polyamine biosynthesis; betaine biosynthesis via choline pathway [regulation]. Repressor involved in the biosynthesis of the osmoprotectant glycine betaine. It represses transcription of the choline transporter BetT and the genes of BetAB involved in the synthesis of glycine betaine. This is HTH-type transcriptional regulator BetI from Brucella canis (strain ATCC 23365 / NCTC 10854 / RM-666).